Reading from the N-terminus, the 108-residue chain is MKLSPKDNERLKIFMAAELAKQRKDRGVKLNHPETIAYISNWVCERARDGMDVAEIRQEATSLLTREDVMDGVPEMIDMVQVEPTFSDGTKLVTVHDPIRGDTREQVE.

Belongs to the urease gamma subunit family. Heterotrimer of UreA (gamma), UreB (beta) and UreC (alpha) subunits. Three heterotrimers associate to form the active enzyme.

The protein resides in the cytoplasm. It carries out the reaction urea + 2 H2O + H(+) = hydrogencarbonate + 2 NH4(+). It participates in nitrogen metabolism; urea degradation; CO(2) and NH(3) from urea (urease route): step 1/1. The protein is Urease subunit gamma of Haloquadratum walsbyi (strain DSM 16790 / HBSQ001).